Here is a 451-residue protein sequence, read N- to C-terminus: UDP-N-acetylmuramoylalanine--D-glutamate ligase (451 aa).

Residue 119 to 125 (GSNGKTT) participates in ATP binding.

It belongs to the MurCDEF family.

It localises to the cytoplasm. It catalyses the reaction UDP-N-acetyl-alpha-D-muramoyl-L-alanine + D-glutamate + ATP = UDP-N-acetyl-alpha-D-muramoyl-L-alanyl-D-glutamate + ADP + phosphate + H(+). The protein operates within cell wall biogenesis; peptidoglycan biosynthesis. Functionally, cell wall formation. Catalyzes the addition of glutamate to the nucleotide precursor UDP-N-acetylmuramoyl-L-alanine (UMA). This chain is UDP-N-acetylmuramoylalanine--D-glutamate ligase, found in Streptococcus agalactiae serotype Ia (strain ATCC 27591 / A909 / CDC SS700).